The primary structure comprises 113 residues: Hydrogenase maturation factor HypA (113 aa).

A Ni(2+)-binding site is contributed by H2. 4 residues coordinate Zn(2+): C73, C76, C89, and C92.

Belongs to the HypA/HybF family.

Functionally, involved in the maturation of [NiFe] hydrogenases. Required for nickel insertion into the metal center of the hydrogenase. This Moorella thermoacetica (strain ATCC 39073 / JCM 9320) protein is Hydrogenase maturation factor HypA.